Here is a 298-residue protein sequence, read N- to C-terminus: Glutamyl-Q tRNA(Asp) synthetase (298 aa).

L-glutamate-binding positions include 8 to 12 and E44; that span reads RFAPS. The 'HIGH' region motif lies at 11–21; that stretch reads PSPTGPLHFGS. 4 residues coordinate Zn(2+): C100, C102, Y123, and C127. 2 residues coordinate L-glutamate: Y183 and R201. A 'KMSKS' region motif is present at residues 239–243; that stretch reads KLSKQ. Residue K242 participates in ATP binding.

The protein belongs to the class-I aminoacyl-tRNA synthetase family. GluQ subfamily. The cofactor is Zn(2+).

Catalyzes the tRNA-independent activation of glutamate in presence of ATP and the subsequent transfer of glutamate onto a tRNA(Asp). Glutamate is transferred on the 2-amino-5-(4,5-dihydroxy-2-cyclopenten-1-yl) moiety of the queuosine in the wobble position of the QUC anticodon. The polypeptide is Glutamyl-Q tRNA(Asp) synthetase (Burkholderia cenocepacia (strain ATCC BAA-245 / DSM 16553 / LMG 16656 / NCTC 13227 / J2315 / CF5610) (Burkholderia cepacia (strain J2315))).